Reading from the N-terminus, the 208-residue chain is uncharacterized protein (208 aa).

Positions 126–151 (VGSGSGSDSSSGSTSSPNTVNNYNSD) are disordered. Over residues 131-141 (GSDSSSGSTSS) the composition is skewed to low complexity.

This is an uncharacterized protein from Dictyostelium discoideum (Social amoeba).